We begin with the raw amino-acid sequence, 736 residues long: 1,4-alpha-glucan branching enzyme GlgB (736 aa).

Asp415 acts as the Nucleophile in catalysis. Catalysis depends on Glu470, which acts as the Proton donor.

The protein belongs to the glycosyl hydrolase 13 family. GlgB subfamily. In terms of assembly, monomer.

It catalyses the reaction Transfers a segment of a (1-&gt;4)-alpha-D-glucan chain to a primary hydroxy group in a similar glucan chain.. The protein operates within glycan biosynthesis; glycogen biosynthesis. Its function is as follows. Catalyzes the formation of the alpha-1,6-glucosidic linkages in glycogen by scission of a 1,4-alpha-linked oligosaccharide from growing alpha-1,4-glucan chains and the subsequent attachment of the oligosaccharide to the alpha-1,6 position. This is 1,4-alpha-glucan branching enzyme GlgB from Burkholderia orbicola (strain AU 1054).